The following is a 361-amino-acid chain: Phenylalanine--tRNA ligase alpha subunit (361 aa).

E260 contacts Mg(2+).

It belongs to the class-II aminoacyl-tRNA synthetase family. Phe-tRNA synthetase alpha subunit type 1 subfamily. As to quaternary structure, tetramer of two alpha and two beta subunits. Mg(2+) is required as a cofactor.

It is found in the cytoplasm. It catalyses the reaction tRNA(Phe) + L-phenylalanine + ATP = L-phenylalanyl-tRNA(Phe) + AMP + diphosphate + H(+). In Allorhizobium ampelinum (strain ATCC BAA-846 / DSM 112012 / S4) (Agrobacterium vitis (strain S4)), this protein is Phenylalanine--tRNA ligase alpha subunit.